The following is a 533-amino-acid chain: Monogalactosyldiacylglycerol synthase 1, chloroplastic (533 aa).

A 1,2-diacyl-sn-glycero-3-phospho-(1'-sn-glycerol)-binding residues include histidine 155 and proline 189. Histidine 155 is a binding site for UDP. The interval glutamine 192 to serine 215 is required for binding to diacyl glycerol. Residues arginine 324, phenylalanine 413, isoleucine 414, glycine 434–glutamate 438, and glutamate 456 contribute to the UDP site.

The protein belongs to the glycosyltransferase 28 family. As to quaternary structure, homodimer. In terms of tissue distribution, expressed in roots, stems, leaves, flowers, siliques and seeds.

The protein resides in the plastid. Its subcellular location is the chloroplast inner membrane. The catalysed reaction is a 1,2-diacyl-sn-glycerol + UDP-alpha-D-galactose = a 1,2-diacyl-3-O-(beta-D-galactosyl)-sn-glycerol + UDP + H(+). It catalyses the reaction 1,2-di-(9Z,12Z-octadecadienoyl)-sn-glycerol + UDP-alpha-D-galactose = 1,2-di-(9Z,12Z-octadecadienoyl)-3-beta-D-galactosyl-sn-glycerol + UDP + H(+). The enzyme catalyses 1-(9Z-octadecenoyl)-2-hexadecanoyl-sn-glycerol + UDP-alpha-D-galactose = 1-(9Z-octadecenoyl)-2-hexadecanoyl-3-beta-D-galactosyl-sn-glycerol + UDP + H(+). It carries out the reaction 1,2-di-(9Z-octadecenoyl)-sn-glycerol + UDP-alpha-D-galactose = 1,2-di-(9Z-octadecenoyl)-3-beta-D-galactosyl-sn-glycerol + UDP + H(+). Activated by phosphatidate (PA) and phosphatidylglycerol (PG). Inhibited by galvestine-1. Involved in the synthesis of the major structural component of photosynthetic membranes. Required for proper thylakoid membrane biogenesis. Does not discriminate between prokaryotic (18:1/16:0) or eukaryotic (18:2/18:2) 1,2-diacylglycerol species, but operates with some preference for the prokaryotic one. Is responsible for most galactolipid synthesis in chloroplasts. Required for the formation of thylakoid membranes and functional photosynthetic electron transport during cotyledons greening in young seedlings. May link galactolipid synthesis with the coordinated transcriptional regulation of chloroplasts and other organelles during cotyledon greening. This is Monogalactosyldiacylglycerol synthase 1, chloroplastic from Arabidopsis thaliana (Mouse-ear cress).